The primary structure comprises 729 residues: Transcriptional activator ptaB (729 aa).

The span at Met-1–Pro-12 shows a compositional bias: pro residues. Disordered stretches follow at residues Met-1–Ala-69, Ala-207–Ala-341, Leu-505–Glu-538, and Arg-614–Ala-729. Residues Pro-38–Ala-56 are compositionally biased toward low complexity. The segment covering Ala-272–Gln-285 has biased composition (pro residues). Composition is skewed to low complexity over residues Leu-286–Pro-300 and Gln-307–Ala-341. The span at Arg-614–Ala-625 shows a compositional bias: polar residues. Over residues Gly-655–Gln-671 the composition is skewed to low complexity. The segment covering Ala-672–Thr-682 has biased composition (polar residues).

This sequence belongs to the MFG1 family. As to quaternary structure, interacts with somA.

The protein localises to the nucleus. Transcriptional regulator that forms a complex with somA to control biofilm formation. In Aspergillus fumigatus (strain ATCC MYA-4609 / CBS 101355 / FGSC A1100 / Af293) (Neosartorya fumigata), this protein is Transcriptional activator ptaB.